Here is a 101-residue protein sequence, read N- to C-terminus: Protein RnfH (101 aa).

It belongs to the UPF0125 (RnfH) family.

This is Protein RnfH from Pseudomonas aeruginosa (strain UCBPP-PA14).